A 310-amino-acid polypeptide reads, in one-letter code: Probable GTP 3',8-cyclase (310 aa).

Positions 5–232 constitute a Radical SAM core domain; the sequence is RFGRPVTNLR…RRRKYFIPID (228 aa). R14 contacts GTP. [4Fe-4S] cluster-binding residues include C21 and C25. Y27 serves as a coordination point for S-adenosyl-L-methionine. C28 is a [4Fe-4S] cluster binding site. Position 61 (K61) interacts with GTP. G65 is a binding site for S-adenosyl-L-methionine. T90 serves as a coordination point for GTP. S114 contacts S-adenosyl-L-methionine. K150 lines the GTP pocket. M189 is a binding site for S-adenosyl-L-methionine. Residues C250 and C253 each contribute to the [4Fe-4S] cluster site. Position 255-257 (255-257) interacts with GTP; sequence RLR. C267 contributes to the [4Fe-4S] cluster binding site.

Belongs to the radical SAM superfamily. MoaA family. [4Fe-4S] cluster is required as a cofactor.

It carries out the reaction GTP + AH2 + S-adenosyl-L-methionine = (8S)-3',8-cyclo-7,8-dihydroguanosine 5'-triphosphate + 5'-deoxyadenosine + L-methionine + A + H(+). Its pathway is cofactor biosynthesis; molybdopterin biosynthesis. Functionally, catalyzes the cyclization of GTP to (8S)-3',8-cyclo-7,8-dihydroguanosine 5'-triphosphate. This Pyrococcus horikoshii (strain ATCC 700860 / DSM 12428 / JCM 9974 / NBRC 100139 / OT-3) protein is Probable GTP 3',8-cyclase.